Reading from the N-terminus, the 143-residue chain is Nucleoside diphosphate kinase (143 aa).

Positions 1-132 (MVKPDGVQRG…LWFSPQELCQ (132 aa)) constitute an NDPK-like domain. Positions 3, 51, 79, 85, 96, 103, and 106 each coordinate ADP. The ATP site is built by lysine 3, phenylalanine 51, arginine 79, threonine 85, and arginine 96. An ATP-binding site is contributed by asparagine 106. Histidine 109 acts as the Pros-phosphohistidine intermediate in catalysis.

It belongs to the NDK family. Homohexamer. The cofactor is Mg(2+).

It carries out the reaction a 2'-deoxyribonucleoside 5'-diphosphate + ATP = a 2'-deoxyribonucleoside 5'-triphosphate + ADP. The catalysed reaction is a ribonucleoside 5'-diphosphate + ATP = a ribonucleoside 5'-triphosphate + ADP. The enzyme catalyses GDP + ATP = GTP + ADP. It functions in the pathway purine metabolism; purine nucleotide biosynthesis. Major role in the synthesis of nucleoside triphosphates other than ATP. The ATP gamma phosphate is transferred to the NDP beta phosphate via a ping-pong mechanism, using a phosphorylated active-site intermediate. The chain is Nucleoside diphosphate kinase from Schistosoma mansoni (Blood fluke).